We begin with the raw amino-acid sequence, 318 residues long: Bifunctional protein FolD 3 (318 aa).

NADP(+)-binding positions include 173 to 175 and Ile-242; that span reads GRS.

The protein belongs to the tetrahydrofolate dehydrogenase/cyclohydrolase family. As to quaternary structure, homodimer.

The catalysed reaction is (6R)-5,10-methylene-5,6,7,8-tetrahydrofolate + NADP(+) = (6R)-5,10-methenyltetrahydrofolate + NADPH. It carries out the reaction (6R)-5,10-methenyltetrahydrofolate + H2O = (6R)-10-formyltetrahydrofolate + H(+). It participates in one-carbon metabolism; tetrahydrofolate interconversion. In terms of biological role, catalyzes the oxidation of 5,10-methylenetetrahydrofolate to 5,10-methenyltetrahydrofolate and then the hydrolysis of 5,10-methenyltetrahydrofolate to 10-formyltetrahydrofolate. The protein is Bifunctional protein FolD 3 of Rubrobacter xylanophilus (strain DSM 9941 / JCM 11954 / NBRC 16129 / PRD-1).